Here is a 568-residue protein sequence, read N- to C-terminus: Dihydroxy-acid dehydratase 1 (568 aa).

The disordered stretch occupies residues 1 to 22 (MAEQTNTPDLKPRSRDVTDGLE). A compositionally biased stretch (basic and acidic residues) spans 10-22 (LKPRSRDVTDGLE). Cysteine 57 lines the [2Fe-2S] cluster pocket. Residue aspartate 89 participates in Mg(2+) binding. Cysteine 130 contributes to the [2Fe-2S] cluster binding site. The Mg(2+) site is built by aspartate 131 and lysine 132. The residue at position 132 (lysine 132) is an N6-carboxylysine. Residue cysteine 207 participates in [2Fe-2S] cluster binding. Residue glutamate 458 participates in Mg(2+) binding. Serine 484 serves as the catalytic Proton acceptor.

It belongs to the IlvD/Edd family. Homodimer. [2Fe-2S] cluster is required as a cofactor. The cofactor is Mg(2+).

It carries out the reaction (2R)-2,3-dihydroxy-3-methylbutanoate = 3-methyl-2-oxobutanoate + H2O. It catalyses the reaction (2R,3R)-2,3-dihydroxy-3-methylpentanoate = (S)-3-methyl-2-oxopentanoate + H2O. It functions in the pathway amino-acid biosynthesis; L-isoleucine biosynthesis; L-isoleucine from 2-oxobutanoate: step 3/4. Its pathway is amino-acid biosynthesis; L-valine biosynthesis; L-valine from pyruvate: step 3/4. In terms of biological role, functions in the biosynthesis of branched-chain amino acids. Catalyzes the dehydration of (2R,3R)-2,3-dihydroxy-3-methylpentanoate (2,3-dihydroxy-3-methylvalerate) into 2-oxo-3-methylpentanoate (2-oxo-3-methylvalerate) and of (2R)-2,3-dihydroxy-3-methylbutanoate (2,3-dihydroxyisovalerate) into 2-oxo-3-methylbutanoate (2-oxoisovalerate), the penultimate precursor to L-isoleucine and L-valine, respectively. This is Dihydroxy-acid dehydratase 1 from Nocardia farcinica (strain IFM 10152).